The chain runs to 329 residues: Sex comb on midleg-like protein 1 (329 aa).

2 positions are modified to phosphoserine: Ser-138 and Ser-238. The interval 138 to 157 (SPTLPVSRRENNSPSNLPRP) is disordered. Residues 258-325 (WSVEAVVLFL…YYIDRLKQGK (68 aa)) form the SAM domain.

Belongs to the SCM family. As to expression, ubiquitous. Expressed in fetal and adult tissues.

The protein localises to the nucleus. In terms of biological role, putative Polycomb group (PcG) protein. PcG proteins act by forming multiprotein complexes, which are required to maintain the transcriptionally repressive state of homeotic genes throughout development. May be involved in spermatogenesis during sexual maturation. The polypeptide is Sex comb on midleg-like protein 1 (SCML1) (Homo sapiens (Human)).